A 269-amino-acid polypeptide reads, in one-letter code: Shikimate dehydrogenase (NADP(+)) (269 aa).

Shikimate is bound by residues 14–16 (SVS) and T61. The Proton acceptor role is filled by K65. The shikimate site is built by N85 and D98. NADP(+) contacts are provided by residues 120 to 124 (GAGGA), 143 to 148 (NRTEEK), and T211. Y213 is a binding site for shikimate. NADP(+) is bound at residue G234.

The protein belongs to the shikimate dehydrogenase family. Homodimer.

It carries out the reaction shikimate + NADP(+) = 3-dehydroshikimate + NADPH + H(+). It participates in metabolic intermediate biosynthesis; chorismate biosynthesis; chorismate from D-erythrose 4-phosphate and phosphoenolpyruvate: step 4/7. Functionally, involved in the biosynthesis of the chorismate, which leads to the biosynthesis of aromatic amino acids. Catalyzes the reversible NADPH linked reduction of 3-dehydroshikimate (DHSA) to yield shikimate (SA). The polypeptide is Shikimate dehydrogenase (NADP(+)) (Archaeoglobus fulgidus (strain ATCC 49558 / DSM 4304 / JCM 9628 / NBRC 100126 / VC-16)).